We begin with the raw amino-acid sequence, 324 residues long: Phospho-N-acetylmuramoyl-pentapeptide-transferase (324 aa).

10 helical membrane passes run 5-25, 52-72, 77-97, 117-137, 147-167, 176-196, 202-222, 227-247, 253-273, and 302-322; these read GLLV…PLFI, PTMG…IMAI, LGAE…IGFL, LLGQ…QGFD, ITFD…IGGS, LDGL…IIAV, AVAI…VFNA, VFMG…VAIL, LLVI…IQVI, and VVVT…YIGV.

The protein belongs to the glycosyltransferase 4 family. MraY subfamily. It depends on Mg(2+) as a cofactor.

The protein localises to the cell membrane. The catalysed reaction is UDP-N-acetyl-alpha-D-muramoyl-L-alanyl-gamma-D-glutamyl-meso-2,6-diaminopimeloyl-D-alanyl-D-alanine + di-trans,octa-cis-undecaprenyl phosphate = di-trans,octa-cis-undecaprenyl diphospho-N-acetyl-alpha-D-muramoyl-L-alanyl-D-glutamyl-meso-2,6-diaminopimeloyl-D-alanyl-D-alanine + UMP. It participates in cell wall biogenesis; peptidoglycan biosynthesis. Functionally, catalyzes the initial step of the lipid cycle reactions in the biosynthesis of the cell wall peptidoglycan: transfers peptidoglycan precursor phospho-MurNAc-pentapeptide from UDP-MurNAc-pentapeptide onto the lipid carrier undecaprenyl phosphate, yielding undecaprenyl-pyrophosphoryl-MurNAc-pentapeptide, known as lipid I. The protein is Phospho-N-acetylmuramoyl-pentapeptide-transferase of Bacillus cytotoxicus (strain DSM 22905 / CIP 110041 / 391-98 / NVH 391-98).